Here is a 570-residue protein sequence, read N- to C-terminus: Sulfite reductase [NADPH] hemoprotein beta-component (570 aa).

The [4Fe-4S] cluster site is built by Cys434, Cys440, Cys479, and Cys483. Cys483 provides a ligand contact to siroheme.

It belongs to the nitrite and sulfite reductase 4Fe-4S domain family. In terms of assembly, alpha(8)-beta(8). The alpha component is a flavoprotein, the beta component is a hemoprotein. Siroheme is required as a cofactor. It depends on [4Fe-4S] cluster as a cofactor.

The catalysed reaction is hydrogen sulfide + 3 NADP(+) + 3 H2O = sulfite + 3 NADPH + 4 H(+). It participates in sulfur metabolism; hydrogen sulfide biosynthesis; hydrogen sulfide from sulfite (NADPH route): step 1/1. Component of the sulfite reductase complex that catalyzes the 6-electron reduction of sulfite to sulfide. This is one of several activities required for the biosynthesis of L-cysteine from sulfate. This Escherichia coli (strain K12) protein is Sulfite reductase [NADPH] hemoprotein beta-component (cysI).